A 388-amino-acid polypeptide reads, in one-letter code: Succinate--CoA ligase [ADP-forming] subunit beta (388 aa).

The ATP-grasp domain occupies 9–244; that stretch reads KELFRTYGIP…TDEEDPLEVE (236 aa). Residues lysine 46, 53-55, glutamate 99, valine 102, and glutamate 107 each bind ATP; that span reads GRG. 2 residues coordinate Mg(2+): asparagine 199 and aspartate 213. Substrate is bound by residues asparagine 264 and 321-323; that span reads GIL.

The protein belongs to the succinate/malate CoA ligase beta subunit family. In terms of assembly, heterotetramer of two alpha and two beta subunits. The cofactor is Mg(2+).

It catalyses the reaction succinate + ATP + CoA = succinyl-CoA + ADP + phosphate. The enzyme catalyses GTP + succinate + CoA = succinyl-CoA + GDP + phosphate. It functions in the pathway carbohydrate metabolism; tricarboxylic acid cycle; succinate from succinyl-CoA (ligase route): step 1/1. Its function is as follows. Succinyl-CoA synthetase functions in the citric acid cycle (TCA), coupling the hydrolysis of succinyl-CoA to the synthesis of either ATP or GTP and thus represents the only step of substrate-level phosphorylation in the TCA. The beta subunit provides nucleotide specificity of the enzyme and binds the substrate succinate, while the binding sites for coenzyme A and phosphate are found in the alpha subunit. This Desulfosudis oleivorans (strain DSM 6200 / JCM 39069 / Hxd3) (Desulfococcus oleovorans) protein is Succinate--CoA ligase [ADP-forming] subunit beta.